Here is a 143-residue protein sequence, read N- to C-terminus: uncharacterized protein (143 aa).

The tract at residues 13 to 143 is disordered; it reads SLQFPHHRPG…QDAAHQCRIQ (131 aa). The span at 17–31 shows a compositional bias: basic residues; that stretch reads PHHRPGLRRHRKNTT. Composition is skewed to basic and acidic residues over residues 35-48, 84-96, and 112-133; these read AAVD…RGDA, DGRE…AEEK, and EKQH…DHAG. Low complexity predominate over residues 134–143; that stretch reads QDAAHQCRIQ.

This is an uncharacterized protein from Homo sapiens (Human).